The sequence spans 504 residues: FAD-dependent monooxygenase nsrK (504 aa).

Residue Arg-146 participates in FAD binding. Arg-227 is an active-site residue. Asp-340 and Gly-353 together coordinate FAD.

The protein belongs to the paxM FAD-dependent monooxygenase family. Requires FAD as cofactor.

The protein operates within secondary metabolite biosynthesis. Its function is as follows. FAD-dependent monooxygenase; part of the gene cluster that mediates the biosynthesis of the tetrahydroxanthone dimer neosartorin, which exhibits antibacterial activity. The two different monomeric units appear to be synthesized by the same set of enzymes, among which the Baeyer-Villiger monooxygenase nsrF is the key enzyme for the divergence of the biosynthetic routes. The pathway begins with the synthesis of atrochrysone thioester by the polyketide synthase nsrB. The atrochrysone carboxyl ACP thioesterase nsrC then breaks the thioester bond and releases the atrochrysone carboxylic acid from AacuL. Atrochrysone carboxylic acid is decarboxylated by the decarboxylase nsrE, and oxidized by the anthrone oxygenase nsrD to yield emodin. Emodin is then reduced to emodin hydroquinone by the oxidoreductase nsrR. A-ring reduction by the short chain dehydrogenase nsrJ, dehydration by the scytalone dehydratase-like protein nsrI and probable spontaneous re-oxidation, results in overall deoxygenation to chrysophanol. The Baeyer-Villiger monooxygenase nsrF accepts chrysophanol as a substrate to insert one oxygen atom at two different positions to yield the precursors of both monomric units. NsrF is promiscuous/flexible in interacting with the 2 (non methylated and methylated) aromatic rings of chrysophanol, thus diverging the biosynthetic pathway at this point. After the hydrolysis of the lactones, methylesterification by the methyltransferase nsrG yields respectively moniliphenone and 2,2',6'-trihydroxy-4-methyl-6-methoxya-cyldiphenylmethanone. The next steps are the hydroxylation by the FAD-dependent monooxygenase nsrK, followed by isomerization by the monooxygenase nsrQ. The short chain dehydrogenase/reductase nsrO then catalyzes the C-5 ketoreduction to give the xanthone skeleton of blennolide C and 5-acetylblennolide A. The acetyltransferase nsrL has a strict substrate specificity and uses only blennolide A but not blennolide C to yield 5-acetylblennolide A as the single-acetylated product. In the final step of the biosynthesis, the heterodimerization of the 2 xanthones, blennolide C and 5-acetylblennolide A, is catalyzed by the cytochrome P450 monooxygenase nsrP. NsrP can utilize at least three different xanthones as its substrates to perform the dimerization reaction. This Aspergillus novofumigatus (strain IBT 16806) protein is FAD-dependent monooxygenase nsrK.